Consider the following 370-residue polypeptide: Pyruvate dehydrogenase E1 component subunit alpha (370 aa).

As to quaternary structure, heterodimer of an alpha and a beta chain. Requires thiamine diphosphate as cofactor.

It catalyses the reaction N(6)-[(R)-lipoyl]-L-lysyl-[protein] + pyruvate + H(+) = N(6)-[(R)-S(8)-acetyldihydrolipoyl]-L-lysyl-[protein] + CO2. In terms of biological role, the pyruvate dehydrogenase complex catalyzes the overall conversion of pyruvate to acetyl-CoA and CO(2). It contains multiple copies of three enzymatic components: pyruvate dehydrogenase (E1), dihydrolipoamide acetyltransferase (E2) and lipoamide dehydrogenase (E3). The protein is Pyruvate dehydrogenase E1 component subunit alpha (pdhA) of Staphylococcus aureus (strain COL).